We begin with the raw amino-acid sequence, 228 residues long: Urease accessory protein UreF (228 aa).

The protein belongs to the UreF family. UreD, UreF and UreG form a complex that acts as a GTP-hydrolysis-dependent molecular chaperone, activating the urease apoprotein by helping to assemble the nickel containing metallocenter of UreC. The UreE protein probably delivers the nickel.

The protein localises to the cytoplasm. Its function is as follows. Required for maturation of urease via the functional incorporation of the urease nickel metallocenter. This is Urease accessory protein UreF from Prochlorococcus marinus (strain AS9601).